The primary structure comprises 232 residues: MTKHGKRIRGILKNYDFSKSYSLREAIDILKQCPPVRFDQTVDVSIKLGIDPKKSDQQIRGAVFLPNGTGKTLRILVFASGNKVKEAVEAGADFMGSDDLVEKIKSGWLEFDVAVATPDMMREVGKLGKVLGPRNLMPTPKTGTVTTDVAKAISELRKGKIEFKADRAGVCNVGVGKLSFESSQIKENIEALSSALIKAKPPAAKGQYLVSFTISSTMGPGISIDTRELMAS.

It belongs to the universal ribosomal protein uL1 family. In terms of assembly, part of the 50S ribosomal subunit.

In terms of biological role, binds directly to 23S rRNA. The L1 stalk is quite mobile in the ribosome, and is involved in E site tRNA release. Functionally, protein L1 is also a translational repressor protein, it controls the translation of the L11 operon by binding to its mRNA. The sequence is that of Large ribosomal subunit protein uL1 from Chlamydia pneumoniae (Chlamydophila pneumoniae).